We begin with the raw amino-acid sequence, 1183 residues long: 3-hydroxy-3-methylglutaryl-coenzyme A reductase (1183 aa).

Topologically, residues 1 to 245 (MAAILLPQRF…DLLKNAETLD (245 aa)) are cytoplasmic. The SSD domain maps to 245–426 (DIVIMLLGYI…FTFYTAILSI (182 aa)). A helical membrane pass occupies residues 246–266 (IVIMLLGYIAMHLTFVSLFLS). At 267 to 273 (MRKMGSK) the chain is on the lumenal side. Residues 274–294 (FWLGICTLFSSVFAFLFGLVV) form a helical membrane-spanning segment. The Cytoplasmic portion of the chain corresponds to 295–299 (TTKLG). The chain crosses the membrane as a helical span at residues 300–320 (VPISVILLSEGLPFLVVTIGF). The Lumenal segment spans residues 321–378 (EKNIVLTRAVMSHAIEHRRIQAQNSKSGKRSPERSTQNMIQYAVQAAIKEKGFEIIRD). A helical membrane pass occupies residues 379-399 (YAIEIVILVIGAASGVQGGLQ). At 400–402 (QFC) the chain is on the cytoplasmic side. The helical transmembrane segment at 403-423 (FLAAWTLFFDFILLFTFYTAI) threads the bilayer. The Lumenal segment spans residues 424-482 (LSIKLEINRIKRHVDMRMALEDDGVSRRVAENVAKGDDELNRVRGDAPLFGRKSSSIPK). Residues 483–503 (FKVLMILGFIFVNIVNICSIP) form a helical membrane-spanning segment. Residues 504–1183 (FRNPSSMSTI…SAAAIQRSKR (680 aa)) lie on the Cytoplasmic side of the membrane. E828 acts as the Charge relay system in catalysis. 834–840 (SASRGCK) serves as a coordination point for CoA. Residues 895–897 (SRF) and 922–930 (DAMGMNMIS) contribute to the NADP(+) site. K962 acts as the Charge relay system in catalysis. 991 to 993 (VLK) contacts CoA. D1038 functions as the Charge relay system in the catalytic mechanism. 1133 to 1134 (AH) serves as a coordination point for CoA. H1134 (proton donor) is an active-site residue. A disordered region spans residues 1136–1183 (QHNRSAAPSRSTTPAPPMTPVSLAMTSAQERSASTTSMSAAAIQRSKR). Residue 1138-1139 (NR) coordinates NADP(+). Composition is skewed to low complexity over residues 1139–1148 (RSAAPSRSTT) and 1167–1177 (SASTTSMSAAA).

Belongs to the HMG-CoA reductase family.

It localises to the endoplasmic reticulum membrane. It catalyses the reaction (R)-mevalonate + 2 NADP(+) + CoA = (3S)-3-hydroxy-3-methylglutaryl-CoA + 2 NADPH + 2 H(+). The protein operates within metabolic intermediate biosynthesis; (R)-mevalonate biosynthesis; (R)-mevalonate from acetyl-CoA: step 3/3. Functionally, HMG-CoA reductase; part of the first module of ergosterol biosynthesis pathway that includes the early steps of the pathway, conserved across all eukaryotes, and which results in the formation of mevalonate from acetyl-coenzyme A (acetyl-CoA). In this module, the cytosolic acetyl-CoA acetyltransferase catalyzes the formation of acetoacetyl-CoA. The hydroxymethylglutaryl-CoA synthase then condenses acetyl-CoA with acetoacetyl-CoA to form HMG-CoA. The rate-limiting step of the early module is the reduction to mevalonate by the 3-hydroxy-3-methylglutaryl-coenzyme A (HMG-CoA) reductase HMGR. The polypeptide is 3-hydroxy-3-methylglutaryl-coenzyme A reductase (HMGR) (Gibberella fujikuroi (strain CBS 195.34 / IMI 58289 / NRRL A-6831) (Bakanae and foot rot disease fungus)).